A 279-amino-acid chain; its full sequence is Small ribosomal subunit protein uS2 (279 aa).

Belongs to the universal ribosomal protein uS2 family. In terms of assembly, component of the small ribosomal subunit. Mature ribosomes consist of a small (40S) and a large (60S) subunit. The 40S subunit contains about 33 different proteins and 1 molecule of RNA (18S). The 60S subunit contains about 49 different proteins and 3 molecules of RNA (28S, 5.8S and 5S). Interacts with ribosomal protein S21.

The protein resides in the cytoplasm. Its function is as follows. Required for the assembly and/or stability of the 40S ribosomal subunit. Required for the processing of the 20S rRNA-precursor to mature 18S rRNA in a late step of the maturation of 40S ribosomal subunits. The chain is Small ribosomal subunit protein uS2 from Schistosoma japonicum (Blood fluke).